We begin with the raw amino-acid sequence, 228 residues long: ATP-dependent dethiobiotin synthetase BioD (228 aa).

Position 13 to 18 (13 to 18) interacts with ATP; it reads DIGKTF. T17 is a Mg(2+) binding site. Residue K38 is part of the active site. Residue S42 participates in substrate binding. ATP is bound by residues D55, 116-119, 179-180, and 208-210; these read EGSG, NK, and PKI. 2 residues coordinate Mg(2+): D55 and E116.

Belongs to the dethiobiotin synthetase family. As to quaternary structure, homodimer. Mg(2+) is required as a cofactor.

The protein resides in the cytoplasm. The enzyme catalyses (7R,8S)-7,8-diammoniononanoate + CO2 + ATP = (4R,5S)-dethiobiotin + ADP + phosphate + 3 H(+). The protein operates within cofactor biosynthesis; biotin biosynthesis; biotin from 7,8-diaminononanoate: step 1/2. In terms of biological role, catalyzes a mechanistically unusual reaction, the ATP-dependent insertion of CO2 between the N7 and N8 nitrogen atoms of 7,8-diaminopelargonic acid (DAPA, also called 7,8-diammoniononanoate) to form a ureido ring. The polypeptide is ATP-dependent dethiobiotin synthetase BioD (Clostridium perfringens (strain 13 / Type A)).